A 305-amino-acid polypeptide reads, in one-letter code: tRNA dimethylallyltransferase (305 aa).

ATP is bound at residue 11–18 (GPTAVGKT). Position 13–18 (13–18 (TAVGKT)) interacts with substrate. The tract at residues 36 to 39 (DSMQ) is interaction with substrate tRNA.

The protein belongs to the IPP transferase family. In terms of assembly, monomer. Mg(2+) is required as a cofactor.

It catalyses the reaction adenosine(37) in tRNA + dimethylallyl diphosphate = N(6)-dimethylallyladenosine(37) in tRNA + diphosphate. Its function is as follows. Catalyzes the transfer of a dimethylallyl group onto the adenine at position 37 in tRNAs that read codons beginning with uridine, leading to the formation of N6-(dimethylallyl)adenosine (i(6)A). This chain is tRNA dimethylallyltransferase, found in Listeria monocytogenes serotype 4a (strain HCC23).